A 111-amino-acid chain; its full sequence is MTIAPTTLLLFAATALAELVGCYLPYLWLRKGGSVWLLLPTALSLAVFVWLLSLHPEASGRVYAAYGGVYIASALLWLWWVDGVTPTRWDLLGAACCLLGMAVIMFSPRSA.

Transmembrane regions (helical) follow at residues 8 to 28 (LLLF…PYLW), 32 to 52 (GGSV…VWLL), 64 to 84 (AAYG…VDGV), and 91 to 111 (LLGA…PRSA).

It belongs to the UPF0060 family.

The protein resides in the cell inner membrane. This Xanthomonas axonopodis pv. citri (strain 306) protein is UPF0060 membrane protein XAC3064.